A 377-amino-acid polypeptide reads, in one-letter code: Probable O-methyltransferase 3 (377 aa).

D241 contacts S-adenosyl-L-methionine. The Proton acceptor role is filled by H279.

The protein belongs to the class I-like SAM-binding methyltransferase superfamily. Cation-independent O-methyltransferase family. Highly expressed in lupulin glands. Detected in early-, mid- and late-stage cones.

This Humulus lupulus (European hop) protein is Probable O-methyltransferase 3.